The sequence spans 108 residues: Large ribosomal subunit protein eL30 (108 aa).

This sequence belongs to the eukaryotic ribosomal protein eL30 family.

The sequence is that of Large ribosomal subunit protein eL30 (rpl30e) from Saccharolobus solfataricus (strain ATCC 35092 / DSM 1617 / JCM 11322 / P2) (Sulfolobus solfataricus).